Consider the following 505-residue polypeptide: TBC1 domain family member 22B (505 aa).

N-acetylalanine is present on alanine 2. Residues serine 58 and serine 116 each carry the phosphoserine modification. The tract at residues 105-146 (SKLRVKPERSQSTTSDVPANYKVIKSSSDAQLSRNSSDTCLR) is disordered. Residues 129 to 146 (KSSSDAQLSRNSSDTCLR) are compositionally biased toward polar residues. Serine 154 is modified (phosphoserine). Residues 210–434 (GVPREVRPIT…RLWDTYQSEP (225 aa)) form the Rab-GAP TBC domain.

In terms of assembly, interacts with ACBD3 and ARFGEF1. Interacts with YWHAB, YWHAE, YWHAG, YWHAH, YWHAQ and YWHAZ.

In terms of biological role, may act as a GTPase-activating protein for Rab family protein(s). The sequence is that of TBC1 domain family member 22B (TBC1D22B) from Homo sapiens (Human).